The chain runs to 299 residues: ClpXP adapter protein SpxH (299 aa).

Belongs to the SpxH family. Interacts with Spx. Interacts with SpxO/YuzO.

The protein localises to the cytoplasm. With respect to regulation, irreversible aggregation upon several stress conditions prevents interaction with Spx and therefore leads to Spx stabilization. Inhibited by interaction with SpxO/YuzO. Functionally, adapter protein required for efficient degradation of Spx by ClpXP under non-stress conditions. Interaction with Spx stabilizes Spx and exposes the C-terminus of Spx for recognition and proteolysis by ClpXP. Is specific for Spx and does not enhance proteolysis by ClpCP protease. Probably binds 2 zinc ions. This chain is ClpXP adapter protein SpxH, found in Bacillus subtilis (strain 168).